The chain runs to 301 residues: NADH-cytochrome b5 reductase 3 (301 aa).

Gly2 carries the N-myristoyl glycine lipid modification. The region spanning Asp40–Gln152 is the FAD-binding FR-type domain. N6-acetyllysine is present on Lys42. Residue Tyr43 is modified to Phosphotyrosine. Lys50 is subject to N6-acetyllysine. FAD is bound by residues Arg92, Pro93, Tyr94, Val109, Lys111, and Phe114. At Lys120 the chain carries N6-acetyllysine. FAD contacts are provided by Lys126, Met127, Ser128, and Thr185.

The protein belongs to the flavoprotein pyridine nucleotide cytochrome reductase family. Component of a complex composed of cytochrome b5, NADH-cytochrome b5 reductase (CYB5R3) and MTARC2. Interacts with MTLN; the interaction is required to maintain cellular lipid composition and leads to stimulation of mitochondrial respiratory complex I activity. FAD is required as a cofactor.

The protein localises to the endoplasmic reticulum membrane. Its subcellular location is the mitochondrion outer membrane. It catalyses the reaction 2 Fe(III)-[cytochrome b5] + NADH = 2 Fe(II)-[cytochrome b5] + NAD(+) + H(+). Functionally, catalyzes the reduction of two molecules of cytochrome b5 using NADH as the electron donor. This chain is NADH-cytochrome b5 reductase 3 (CYB5R3), found in Bos taurus (Bovine).